The chain runs to 436 residues: 3-ketoacyl-CoA thiolase (436 aa).

The active-site Acyl-thioester intermediate is cysteine 99. Catalysis depends on proton acceptor residues histidine 392 and cysteine 422.

It belongs to the thiolase-like superfamily. Thiolase family. As to quaternary structure, heterotetramer of two alpha chains (FadJ) and two beta chains (FadI).

It localises to the cytoplasm. The enzyme catalyses an acyl-CoA + acetyl-CoA = a 3-oxoacyl-CoA + CoA. It participates in lipid metabolism; fatty acid beta-oxidation. Its function is as follows. Catalyzes the final step of fatty acid oxidation in which acetyl-CoA is released and the CoA ester of a fatty acid two carbons shorter is formed. The chain is 3-ketoacyl-CoA thiolase from Escherichia coli (strain ATCC 8739 / DSM 1576 / NBRC 3972 / NCIMB 8545 / WDCM 00012 / Crooks).